The chain runs to 156 residues: Small ribosomal subunit protein uS7 (156 aa).

It belongs to the universal ribosomal protein uS7 family. Part of the 30S ribosomal subunit. Contacts proteins S9 and S11.

One of the primary rRNA binding proteins, it binds directly to 16S rRNA where it nucleates assembly of the head domain of the 30S subunit. Is located at the subunit interface close to the decoding center, probably blocks exit of the E-site tRNA. The polypeptide is Small ribosomal subunit protein uS7 (Nitrobacter hamburgensis (strain DSM 10229 / NCIMB 13809 / X14)).